Reading from the N-terminus, the 407-residue chain is tRNA (guanine(9)-N1)-methyltransferase (407 aa).

Positions 1-19 are enriched in basic and acidic residues; it reads MDLDPAHKPSQAEETKEQG. Disordered regions lie at residues 1–105 and 220–256; these read MDLD…VRKR and ENMI…PRPE. Residues 20 to 32 are compositionally biased toward low complexity; it reads NEQGQVEQNQAQQ. Residues 91–103 are compositionally biased toward basic residues; the sequence is LKRKDSRIARKVR. The SAM-dependent MTase TRM10-type domain occupies 120 to 356; that stretch reads ANKQKPPSVN…SVIPKRKGGK (237 aa). Residues 263 to 264, Gly-283, 287 to 291, Cys-295, Leu-309, and 321 to 323 each bind S-adenosyl-L-methionine; these read LS, DKNRE, and TVL. Asp-287 serves as the catalytic Proton acceptor. Residues 353–407 are disordered; the sequence is KGGKLKEQQGASGETQETEEAEAEDPEEENEETKDPDAEASASKQNTPKVEVTSK. A compositionally biased stretch (acidic residues) spans 368–386; it reads QETEEAEAEDPEEENEETK. Over residues 394–407 the composition is skewed to polar residues; sequence ASKQNTPKVEVTSK.

The protein belongs to the class IV-like SAM-binding methyltransferase superfamily. TRM10 family. As to quaternary structure, monomer.

It localises to the cytoplasm. Its subcellular location is the nucleus. It carries out the reaction guanosine(9) in tRNA + S-adenosyl-L-methionine = N(1)-methylguanosine(9) in tRNA + S-adenosyl-L-homocysteine + H(+). Functionally, S-adenosyl-L-methionine-dependent guanine N(1)-methyltransferase that catalyzes the formation of N(1)-methylguanine at position 9 (m1G9) in cytoplasmic tRNA. This is tRNA (guanine(9)-N1)-methyltransferase from Gibberella zeae (strain ATCC MYA-4620 / CBS 123657 / FGSC 9075 / NRRL 31084 / PH-1) (Wheat head blight fungus).